We begin with the raw amino-acid sequence, 769 residues long: Ligand-dependent nuclear receptor-interacting factor 1 (769 aa).

Residues Lys-259 and Lys-279 each participate in a glycyl lysine isopeptide (Lys-Gly) (interchain with G-Cter in SUMO2) cross-link. Polar residues predominate over residues 378–387; sequence QIDQQNSVSP. The interval 378–400 is disordered; it reads QIDQQNSVSPDTPVRKDTLQTVS. 3 positions are modified to phosphoserine: Ser-402, Ser-430, and Ser-436. Lys-446 is covalently cross-linked (Glycyl lysine isopeptide (Lys-Gly) (interchain with G-Cter in SUMO2)). Residue Ser-502 is modified to Phosphoserine. A disordered region spans residues 528 to 562; sequence DQEPKIHNEMASTSDKGAQGRNDKKDSQGRSNKAL. The PxVxL motif motif lies at 580-584; sequence LRVCL. Ser-599 is modified (phosphoserine). A Glycyl lysine isopeptide (Lys-Gly) (interchain with G-Cter in SUMO2) cross-link involves residue Lys-605. 2 short sequence motifs (nuclear localization signal) span residues 628–631 and 642–645; these read KKRK. Residue Lys-702 forms a Glycyl lysine isopeptide (Lys-Gly) (interchain with G-Cter in SUMO2) linkage. At Thr-732 the chain carries Phosphothreonine. The stretch at 740–769 forms a coiled coil; that stretch reads IRDEKIRRLKQVLREKEAALEEMRKKMHQK.

Belongs to the LRIF1 family. Interacts with RARA. Interacts with SMCHD1; leading to recruitment to inactivated chromosome X in females. Interacts (via PxVxL motif) with HP1 (CBX1/HP1-beta, CBX3/HP1-gamma and CBX5/HP1-alpha). As to expression, widely expressed, with the highest expression levels in heart, liver and placenta.

The protein localises to the chromosome. The protein resides in the nucleus matrix. Together with SMCHD1, involved in chromosome X inactivation in females by promoting the compaction of heterochromatin. Also able to repress the ligand-induced transcriptional activity of retinoic acid receptor alpha (RARA), possibly through direct recruitment of histone deacetylases. Also required for silencing of the DUX4 locus in somatic cells. The protein is Ligand-dependent nuclear receptor-interacting factor 1 of Homo sapiens (Human).